A 155-amino-acid polypeptide reads, in one-letter code: MPKGSGKVIAQNKKAFHDYFIDETYEAGLVLQGTEIKAIRAGRVNLKDAFARVHNGEVWVHNMHISPYEQGNRFNHDPLRTRKLLLHKKEIQKLVGYTKETGYTLVPLKIYLKNGFAKMALGLARGKKQYDKRHDLKEKEAKREIARAFRDRQKM.

This sequence belongs to the SmpB family.

It is found in the cytoplasm. In terms of biological role, required for rescue of stalled ribosomes mediated by trans-translation. Binds to transfer-messenger RNA (tmRNA), required for stable association of tmRNA with ribosomes. tmRNA and SmpB together mimic tRNA shape, replacing the anticodon stem-loop with SmpB. tmRNA is encoded by the ssrA gene; the 2 termini fold to resemble tRNA(Ala) and it encodes a 'tag peptide', a short internal open reading frame. During trans-translation Ala-aminoacylated tmRNA acts like a tRNA, entering the A-site of stalled ribosomes, displacing the stalled mRNA. The ribosome then switches to translate the ORF on the tmRNA; the nascent peptide is terminated with the 'tag peptide' encoded by the tmRNA and targeted for degradation. The ribosome is freed to recommence translation, which seems to be the essential function of trans-translation. In Bacillus cytotoxicus (strain DSM 22905 / CIP 110041 / 391-98 / NVH 391-98), this protein is SsrA-binding protein.